The following is a 517-amino-acid chain: MALALRRLSSSVKKPISLLSSNGGSLRFMSSLSTAAMAESEKSRSSWIKQLNASLDEIDPEVADIIELEKARQWKGFELIPSENFTSLSVMQAVGSVMTNKYSEGYPGARYYGGNEYIDMAETLCQKRALEAFQLDPSKWGVNVQSLSGSPANFQVYTALLKPHERIMALDLPHGGHLSHGYQTDTKKISAVSIFFETMPYRLDENTGYIDYDQLEKSAVLFRPKLIVAGASAYARLYDYARIRKVCNKQKAVMLADMAHISGLVAAGVIPSPFEYADVVTTTTHKSLRGPRGAMIFFRKGLKEINKQGKEVMYDYEDRINQAVFPGLQGGPHNHTITGLAVALKQARTPEYKAYQDQVLRNCSKFAETLLAKGYDLVSGGTDNHLVLVNLKNKGIDGSRVEKVLELVHIAANKNTVPGDVSAMVPGGIRMGTPALTSRGFIEEDFAKVAEYFDLAVKIALKIKAESQGTKLKDFVATMQSNEKLQSEMSKLREMVEEYAKQFPTIGFEKETMRYKE.

The transit peptide at Met1–Met29 directs the protein to the mitochondrion. Ser82 contacts L-serine. Pemetrexed-binding positions include Ser82, Tyr102, Glu104, Tyr112, Ser148–Ser150, and His177. The L-serine site is built by Glu104 and Tyr112. Glu104 provides a ligand contact to methotrexate. Thr184–Thr186 serves as a coordination point for methotrexate. Ser232 and His260 together coordinate pemetrexed. His260 and Lys286 together coordinate L-serine. N6-(pyridoxal phosphate)lysine is present on Lys286. Gly331 is a pemetrexed binding site. Lys414 serves as a coordination point for methotrexate. Arg430 is a binding site for L-serine. Arg430 is a pemetrexed binding site.

The protein belongs to the SHMT family. Homotetramer. Requires pyridoxal 5'-phosphate as cofactor. As to expression, ubiquitous. Mainly expressed in the shoot apical meristem and roots. Also detected in the leaf vasculature, especially in the protoxylem and adjacent cell layers.

The protein resides in the mitochondrion. It carries out the reaction (6R)-5,10-methylene-5,6,7,8-tetrahydrofolate + glycine + H2O = (6S)-5,6,7,8-tetrahydrofolate + L-serine. Its pathway is one-carbon metabolism; tetrahydrofolate interconversion. Its activity is regulated as follows. Inhibited by the antifolate drugs methotrexate and pemetrexed. In terms of biological role, functions outside the photorespiratory pathway in catalyzing the interconversion of serine and glycine with the conversion of tetrahydrofolate (THF) into 5,10-methylene-THF. The protein is Serine hydroxymethyltransferase 2, mitochondrial of Arabidopsis thaliana (Mouse-ear cress).